The sequence spans 250 residues: Small ribosomal subunit protein uS3 (250 aa).

The 69-residue stretch at 39–107 (VRAALKKRLY…EVHLNIVEIR (69 aa)) folds into the KH type-2 domain. The tract at residues 215 to 250 (LDKRLATESGPAGEGGGRERGDRPDRGDRRDRRDRA) is disordered. The span at 230 to 250 (GGRERGDRPDRGDRRDRRDRA) shows a compositional bias: basic and acidic residues.

The protein belongs to the universal ribosomal protein uS3 family. As to quaternary structure, part of the 30S ribosomal subunit. Forms a tight complex with proteins S10 and S14.

In terms of biological role, binds the lower part of the 30S subunit head. Binds mRNA in the 70S ribosome, positioning it for translation. The sequence is that of Small ribosomal subunit protein uS3 from Caulobacter vibrioides (strain ATCC 19089 / CIP 103742 / CB 15) (Caulobacter crescentus).